A 123-amino-acid chain; its full sequence is MARIAGVNIPTNKRVVIALTYIYGIGLSLANRICEGCNIDHNVRVVNLSDDEIIRIRNFIRENYIVEGDLRKEVSMNIKFLTDIGCYRGLRHRRGLPVRGQRTHTNAKTRKGRSKLPVAAKKK.

The interval 97–123 (PVRGQRTHTNAKTRKGRSKLPVAAKKK) is disordered.

This sequence belongs to the universal ribosomal protein uS13 family. Part of the 30S ribosomal subunit. Forms a loose heterodimer with protein S19. Forms two bridges to the 50S subunit in the 70S ribosome.

Functionally, located at the top of the head of the 30S subunit, it contacts several helices of the 16S rRNA. In the 70S ribosome it contacts the 23S rRNA (bridge B1a) and protein L5 of the 50S subunit (bridge B1b), connecting the 2 subunits; these bridges are implicated in subunit movement. Contacts the tRNAs in the A and P-sites. This chain is Small ribosomal subunit protein uS13, found in Ehrlichia canis (strain Jake).